The following is a 64-amino-acid chain: uncharacterized protein (64 aa).

It localises to the mitochondrion. This is an uncharacterized protein from Marchantia polymorpha (Common liverwort).